We begin with the raw amino-acid sequence, 466 residues long: 55 kDa erythrocyte membrane protein (466 aa).

At threonine 2 the chain carries N-acetylthreonine. A phosphoserine mark is found at serine 13 and serine 19. Threonine 49 is modified (phosphothreonine). A phosphoserine mark is found at serine 52, serine 57, and serine 110. Positions 71-152 (LIQFEKVTEE…MISLKVIPNQ (82 aa)) constitute a PDZ domain. Residues 158 to 228 (ALQMFMRAQF…PSPELQEWRV (71 aa)) form the SH3 domain. Serine 243 carries the post-translational modification Phosphoserine. Residues 268-466 (VVSYEEVVRL…PQWVPVSWVY (199 aa)) are interaction with PALS1. A Guanylate kinase-like domain is found at 282-451 (RKTLVLIGAS…TLKKLQEAFD (170 aa)).

It belongs to the MAGUK family. In terms of assembly, heterodimer with PALS1. Interacts with DLG5 and NF2. Interacts (via guanylate kinase-like domain) with WHRN (via third PDZ domain). In terms of processing, palmitoylated. In terms of tissue distribution, ubiquitous.

Its subcellular location is the cell membrane. It is found in the cell projection. It localises to the stereocilium. Essential regulator of neutrophil polarity. Regulates neutrophil polarization by regulating AKT1 phosphorylation through a mechanism that is independent of PIK3CG activity. The chain is 55 kDa erythrocyte membrane protein (MPP1) from Homo sapiens (Human).